The following is a 515-amino-acid chain: Alpha,alpha-trehalose-phosphate synthase [UDP-forming] 1 (515 aa).

Residues Tyr-97 and Asp-151 each coordinate D-glucose 6-phosphate. The UDP site is built by Arg-287 and Lys-292. UDP-alpha-D-glucose contacts are provided by Arg-287 and Lys-292. Residue Arg-325 coordinates D-glucose 6-phosphate. Residues Val-364 and 390–394 (LVAYE) contribute to the UDP site. UDP-alpha-D-glucose is bound at residue 386-394 (DGMNLVAYE). The tract at residues 483 to 515 (GKFQSRKAKLPESADAEKPMNGSGESEESQTTQ) is disordered. A compositionally biased stretch (basic and acidic residues) spans 491–500 (KLPESADAEK).

The protein belongs to the glycosyltransferase 20 family.

The enzyme catalyses D-glucose 6-phosphate + UDP-alpha-D-glucose = alpha,alpha-trehalose 6-phosphate + UDP + H(+). It participates in carbohydrate biosynthesis. Its function is as follows. Synthase catalytic subunit of the trehalose synthase complex that catalyzes the production of trehalose from glucose-6-phosphate and UDP-alpha-D-glucose in a two step process. The disaccharide trehalose serves as a storage carbohydrate that is mobilized during conidial germination. Regulates the level of trehalose as a protectant for cell integrity during thermal and oxidative stress. This is Alpha,alpha-trehalose-phosphate synthase [UDP-forming] 1 from Aspergillus fumigatus (strain ATCC MYA-4609 / CBS 101355 / FGSC A1100 / Af293) (Neosartorya fumigata).